A 673-amino-acid chain; its full sequence is Inactive polyglycylase TTLL10 (673 aa).

Residues M1–G132 are disordered. A compositionally biased stretch (basic residues) spans F8 to A36. Over residues A52–G62 the composition is skewed to pro residues. The segment covering P89–E105 has biased composition (basic and acidic residues). The 398-residue stretch at P155–K552 folds into the TTL domain. ATP-binding positions include Q362–I365, K375, and D377. The disordered stretch occupies residues E569 to P673. Pro residues predominate over residues P612 to P627. The span at A661–P673 shows a compositional bias: basic and acidic residues.

Its function is as follows. Inactive polyglycylase. The protein is Inactive polyglycylase TTLL10 of Homo sapiens (Human).